We begin with the raw amino-acid sequence, 250 residues long: Small ribosomal subunit protein uS3 (250 aa).

Residues 16 to 85 (IDEYLEKELE…NPQIEVKEVS (70 aa)) enclose the KH type-2 domain.

The protein belongs to the universal ribosomal protein uS3 family. As to quaternary structure, part of the 30S ribosomal subunit.

Binds the lower part of the 30S subunit head. In Methanobrevibacter smithii (strain ATCC 35061 / DSM 861 / OCM 144 / PS), this protein is Small ribosomal subunit protein uS3.